Here is a 395-residue protein sequence, read N- to C-terminus: MQNLVILGATGSIGKSTLDVIKRNPERYRAFALVAATSVERMRDLCIEHRPRYAHMVDESAAKRLADALPTGLGIEVSSGDEALLGLVTAAEVDTVMAAIVGAAGLLPTLAAVRAGKRVLLANKEALVMSGELFMEETKKSGAQLLPVDSEHNAIFQCLPEQVQREIGHCDLSAAGISHILLTGSGGPFLTSPLDTLATMTPAQACKHPNWSMGPKISVDSATMMNKGLEFIEARWLFNTARDELKVVIHPQSVIHSMVQYRDGSVLAQMGNPDMRTPIAHAMAYPQRISAGVEPLDFFKVGHLSFCEPDYSRFPCLKLAMDACHQGQEATTVLNAANEVAVAAFLDGRIGFTDIAVINGECLGKIAKTHLDSLDAILALDWEARRLANQLISRV.

NADPH-binding residues include Thr10, Gly11, Ser12, Ile13, Ala36, and Asn123. Position 124 (Lys124) interacts with 1-deoxy-D-xylulose 5-phosphate. Residue Glu125 participates in NADPH binding. Residue Asp149 coordinates Mn(2+). Positions 150, 151, 185, and 208 each coordinate 1-deoxy-D-xylulose 5-phosphate. Mn(2+) is bound at residue Glu151. Position 214 (Gly214) interacts with NADPH. Residues Ser221, Asn226, Lys227, and Glu230 each coordinate 1-deoxy-D-xylulose 5-phosphate. Glu230 contacts Mn(2+).

Belongs to the DXR family. Mg(2+) is required as a cofactor. Requires Mn(2+) as cofactor.

The catalysed reaction is 2-C-methyl-D-erythritol 4-phosphate + NADP(+) = 1-deoxy-D-xylulose 5-phosphate + NADPH + H(+). Its pathway is isoprenoid biosynthesis; isopentenyl diphosphate biosynthesis via DXP pathway; isopentenyl diphosphate from 1-deoxy-D-xylulose 5-phosphate: step 1/6. In terms of biological role, catalyzes the NADPH-dependent rearrangement and reduction of 1-deoxy-D-xylulose-5-phosphate (DXP) to 2-C-methyl-D-erythritol 4-phosphate (MEP). This chain is 1-deoxy-D-xylulose 5-phosphate reductoisomerase, found in Shewanella amazonensis (strain ATCC BAA-1098 / SB2B).